The sequence spans 133 residues: Large ribosomal subunit protein bL20 (133 aa).

Belongs to the bacterial ribosomal protein bL20 family.

Its function is as follows. Binds directly to 23S ribosomal RNA and is necessary for the in vitro assembly process of the 50S ribosomal subunit. It is not involved in the protein synthesizing functions of that subunit. The chain is Large ribosomal subunit protein bL20 from Chelativorans sp. (strain BNC1).